The primary structure comprises 747 residues: Cysteine--tRNA ligase, cytoplasmic (747 aa).

Residues 1 to 25 (MTDSWERGKGRRTQPPWSAPNTQAQ) are disordered. Positions 15–25 (PPWSAPNTQAQ) are enriched in polar residues. C54 serves as a coordination point for Zn(2+). Residue G55 participates in L-cysteine binding. The 'HIGH' region signature appears at 56-66 (PTVYDASHMGH). T95 contributes to the L-cysteine binding site. Positions 100 to 103 (KIIK) match the 'KIIK' region motif. Positions 347, 372, and 376 each coordinate Zn(2+). H372 provides a ligand contact to L-cysteine. Positions 405-409 (KMSKS) match the 'KMSKS' region motif. K408 serves as a coordination point for ATP. The span at 651–683 (EEKRKAEEEKQRKKEEAARKKQQQEAAKLEKMK) shows a compositional bias: basic and acidic residues. Residues 651-722 (EEKRKAEEEK…KELSKGQSKK (72 aa)) are disordered.

The protein belongs to the class-I aminoacyl-tRNA synthetase family. As to quaternary structure, homodimer. Zn(2+) serves as cofactor.

The protein localises to the cytoplasm. It catalyses the reaction tRNA(Cys) + L-cysteine + ATP = L-cysteinyl-tRNA(Cys) + AMP + diphosphate. Functionally, catalyzes the ATP-dependent ligation of cysteine to tRNA(Cys). The sequence is that of Cysteine--tRNA ligase, cytoplasmic (cars1) from Xenopus tropicalis (Western clawed frog).